A 715-amino-acid polypeptide reads, in one-letter code: Tensin-4 (715 aa).

An N-terminal signal peptide occupies residues 1 to 18 (MSQVMSSPLLAGGHAVSL). Position 82 is a phosphoserine (S82). Disordered stretches follow at residues 159-183 (RCHDGPQHCSSPSVTPPFGSLRSGG), 195-251 (RSSS…SPLV), 291-364 (SLLH…CPPS), and 376-435 (LING…ARDM). The span at 197 to 206 (SSESLIFSGN) shows a compositional bias: polar residues. A Phosphoserine modification is found at S248. Positions 291 to 325 (SLLHSSNSSHQSSSRSLESPANSSSSLHSLGSVSL) are enriched in low complexity. Residues 449-556 (WFKPNITREQ…ALPCKLTIPQ (108 aa)) form the SH2 domain. The PTB domain maps to 582–705 (CHTLYLSSVS…QPASQVIGLV (124 aa)).

Belongs to the PTEN phosphatase protein family. Interacts (via SH2 domain) with Rho GTPase-activating protein DLC1 (via C-terminus); the interaction is independent of DLC1 tyrosine phosphorylation. Interacts with integrin ITGB1; the interaction displaces tensin TNS3 from the ITGB1 cytoplasmic tail and promotes ITGB1 stability. Interacts (via SH2 domain) with E3 ubiquitin-protein ligase CBL (phosphorylated on 'Tyr-774'); the interaction is enhanced in the presence of EGF and reduces interaction of CBL with EGFR. Interacts (via SH2 domain) with receptor tyrosine kinase MET (when phosphorylated); the interaction increases MET protein stability. Post-translationally, proteolytically cleaved by caspase-3 during apoptosis. In terms of tissue distribution, expressed at low levels in colon (at protein level). Expressed in prostate and placenta.

It localises to the cell junction. It is found in the focal adhesion. The protein localises to the cytoplasm. The protein resides in the cytoskeleton. Promotes EGF-induced cell migration by displacing tensin TNS3 from the cytoplasmic tail of integrin ITGB1 which results in dissociation of TNS3 from focal adhesions, disassembly of actin stress fibers and initiation of cell migration. Suppresses ligand-induced degradation of EGFR by reducing EGFR ubiquitination in the presence of EGF. Increases MET protein stability by inhibiting MET endocytosis and subsequent lysosomal degradation which leads to increased cell survival, proliferation and migration. This chain is Tensin-4 (TNS4), found in Homo sapiens (Human).